Consider the following 131-residue polypeptide: Acidic leucine-rich nuclear phosphoprotein 32 family member D (131 aa).

LRR repeat units follow at residues 18–38 (DVKELFLDNSQSNEGKLEGLT), 43–64 (ELELLNTINIGLTSIANLPKLN), 65–87 (KLKKLELSSNRASVGLEVLAEKC), 89–110 (NLIHLNLSGNKIKDLSTIEPLK), and 114–131 (NLESLDLFTCEVTNLNNY).

The protein belongs to the ANP32 family.

This is Acidic leucine-rich nuclear phosphoprotein 32 family member D (ANP32D) from Homo sapiens (Human).